Consider the following 1549-residue polypeptide: Ferredoxin-dependent glutamate synthase (1549 aa).

The For GATase activity role is filled by C37. Positions 37-435 (CGVGFIAHLD…PGEMIVLDLQ (399 aa)) constitute a Glutamine amidotransferase type-2 domain. Residue 1116 to 1173 (LHEVHCLLVENNLREKVILRVDGGLRTGQDVVMAALLGADEYGFGTIAMIAGGCIMAR) participates in FMN binding. [3Fe-4S] cluster-binding residues include C1169, C1175, and C1180.

The protein belongs to the glutamate synthase family. As to quaternary structure, monomer. [3Fe-4S] cluster serves as cofactor. The cofactor is FAD. It depends on FMN as a cofactor.

Its subcellular location is the plastid. The protein resides in the chloroplast stroma. It carries out the reaction 2 oxidized [2Fe-2S]-[ferredoxin] + 2 L-glutamate = L-glutamine + 2 reduced [2Fe-2S]-[ferredoxin] + 2-oxoglutarate + 2 H(+). It participates in amino-acid biosynthesis; L-glutamate biosynthesis via GLT pathway; L-glutamate from 2-oxoglutarate and L-glutamine (ferredoxin route): step 1/1. Its pathway is energy metabolism; nitrogen metabolism. This chain is Ferredoxin-dependent glutamate synthase (gltB), found in Cyanidium caldarium (Red alga).